A 305-amino-acid polypeptide reads, in one-letter code: Cytoplasmic envelopment protein 1 (305 aa).

The protein belongs to the herpesviridae cytoplasmic envelopment protein 1 family.

It is found in the virion. It localises to the virion tegument. The protein resides in the host cytoplasm. The protein localises to the host Golgi apparatus. Plays a critical role in cytoplasmic virus egress. Participates in the final step of tegumentation and envelope acquisition within the host cytoplasm. The protein is Cytoplasmic envelopment protein 1 (MDV019) of Gallus gallus (Chicken).